Here is a 500-residue protein sequence, read N- to C-terminus: Trehalose-6-phosphate synthase (500 aa).

R28 contributes to the D-glucose 6-phosphate binding site. UDP-alpha-D-glucose is bound at residue 48–49 (GG). Residues Y108 and D162 each contribute to the D-glucose 6-phosphate site. 2 residues coordinate UDP-alpha-D-glucose: R304 and K309. R342 is a binding site for D-glucose 6-phosphate. 407–411 (LVAKE) contacts UDP-alpha-D-glucose.

Belongs to the glycosyltransferase 20 family. In terms of assembly, homotetramer.

It catalyses the reaction ADP-alpha-D-glucose + D-glucose 6-phosphate = alpha,alpha-trehalose 6-phosphate + ADP + H(+). It carries out the reaction CDP-alpha-D-glucose + D-glucose 6-phosphate = alpha,alpha-trehalose 6-phosphate + CDP + H(+). The catalysed reaction is GDP-alpha-D-glucose + D-glucose 6-phosphate = alpha,alpha-trehalose 6-phosphate + GDP + H(+). The enzyme catalyses TDP-alpha-D-glucose + D-glucose 6-phosphate = 5-methyl-UDP + alpha,alpha-trehalose 6-phosphate + H(+). It catalyses the reaction D-glucose 6-phosphate + UDP-alpha-D-glucose = alpha,alpha-trehalose 6-phosphate + UDP + H(+). Its pathway is glycan biosynthesis; trehalose biosynthesis. Functionally, probably involved in the osmoprotection via the biosynthesis of trehalose and in the production of glycogen and alpha-glucan via the TreS-Pep2 branch involved in the biosynthesis of maltose-1-phosphate (M1P). Catalyzes the transfer of glucose from UDP-glucose (UDP-Glc) to D-glucose 6-phosphate (Glc-6-P) to form trehalose-6-phosphate. Probably also able to use ADP-Glc, CDP-Glc, GDP-Glc and TDP-Glc as glucosyl donors. The chain is Trehalose-6-phosphate synthase from Mycobacterium bovis (strain ATCC BAA-935 / AF2122/97).